Reading from the N-terminus, the 452-residue chain is RNA polymerase II-associated protein rba50 (452 aa).

Disordered regions lie at residues L60–E83, E125–R202, and P223–F261. A compositionally biased stretch (basic and acidic residues) spans E125 to S135. The segment covering S136–S154 has biased composition (polar residues). Basic and acidic residues predominate over residues E156–N165. Low complexity predominate over residues S170–S191.

It belongs to the RPAP1 family. In terms of assembly, interacts with RNA polymerase II.

Its subcellular location is the cytoplasm. The protein localises to the nucleus. Functionally, forms an interface between the RNA polymerase II enzyme and chaperone/scaffolding proteins, suggesting that it is required to connect RNA polymerase II to regulators of protein complex formation. The protein is RNA polymerase II-associated protein rba50 (rba50) of Schizosaccharomyces pombe (strain 972 / ATCC 24843) (Fission yeast).